Consider the following 264-residue polypeptide: Short chain dehydrogenase/reductase AacuN (264 aa).

Ile-24, Asp-70, Asn-97, and Arg-130 together coordinate NADP(+). Active-site proton donor residues include Ser-146, Ser-147, and Tyr-161. Residues Tyr-161, Lys-165, and Thr-196 each coordinate NADP(+). Lys-165 serves as the catalytic Lowers pKa of active site Tyr.

The protein belongs to the short-chain dehydrogenases/reductases (SDR) family.

The catalysed reaction is 3,8,9,10-tetrahydroxy-6-methyl-1,4-dihydroanthracen-1-one + NADPH + H(+) = (3R)-3,8,9,10-tetrahydroxy-6-methyl-1,2,3,4-tetrahydroanthracen-1-one + NADP(+). It participates in secondary metabolite biosynthesis. In terms of biological role, atrochrysone carboxylic acid synthase; part of the gene cluster that mediates the biosynthesis of the tetrahydroxanthone dimer secalonic acid D. The pathway begins with the synthesis of atrochrysone thioester by the polyketide synthase AacuL. The atrochrysone carboxyl ACP thioesterase AacuM then breaks the thioester bond and releases the atrochrysone carboxylic acid from AacuL. Atrochrysone carboxylic acid is decarboxylated by the decarboxylase AacuI, and oxidized by the anthrone oxygenase AacuG to yield emodin. Emodin is then reduced to emodin hydroquinone by a yet unidentified oxidoreductase. A-ring reduction by the short chain dehydrogenase AacuN, dehydration by the scytalone dehydratase-like protein AacuK and probable spontaneous re-oxidation, results in overall deoxygenation to chrysophanol. Baeyer-Villiger oxidation by the Baeyer-Villiger monooxygenase (BVMO) AacuH then yields monodictyphenone. Monodictyphenone is transformed into compounds with the tetrahydroxanthone skeleton via methylesterification by the methyltransferase AacuQ, followed by the action of the flavin-dependent monooxygenase AacuC, the isomerase AacuP, and the short chain dehydrogenase/reductase AacuF or AacuD. AacuF and AacuD should accept the same compound as a substrate but perform the ketoreduction with a different stereoselectivity, thus yielding blennolides B and A, respectively. In the final step of the biosynthesis, the cytochrome P450 monooxygenase AacuE accepts blennolide B and/or blennolide A to conduct the dimerization reaction to furnish the tetrahydroxanthone dimers, secalonic acids D, B, and F. The chain is Short chain dehydrogenase/reductase AacuN from Aspergillus aculeatus (strain ATCC 16872 / CBS 172.66 / WB 5094).